We begin with the raw amino-acid sequence, 122 residues long: Large ribosomal subunit protein bL17 (122 aa).

Belongs to the bacterial ribosomal protein bL17 family. Part of the 50S ribosomal subunit. Contacts protein L32.

The polypeptide is Large ribosomal subunit protein bL17 (Nautilia profundicola (strain ATCC BAA-1463 / DSM 18972 / AmH)).